Reading from the N-terminus, the 224-residue chain is Endonuclease NucS (224 aa).

The protein belongs to the NucS endonuclease family.

It localises to the cytoplasm. Cleaves both 3' and 5' ssDNA extremities of branched DNA structures. The chain is Endonuclease NucS from Rhodococcus jostii (strain RHA1).